The primary structure comprises 558 residues: Asparagine--tRNA ligase, cytoplasmic (558 aa).

Ser-71 is subject to Phosphoserine. The interval 79 to 101 is disordered; it reads MWHREQMKSESREKKEAEDSLRR. Residues 81-101 are compositionally biased toward basic and acidic residues; sequence HREQMKSESREKKEAEDSLRR. N6-acetyllysine occurs at positions 254 and 500.

The protein belongs to the class-II aminoacyl-tRNA synthetase family. As to quaternary structure, homodimer.

Its subcellular location is the cytoplasm. The enzyme catalyses tRNA(Asn) + L-asparagine + ATP = L-asparaginyl-tRNA(Asn) + AMP + diphosphate + H(+). In terms of biological role, catalyzes the attachment of asparagine to tRNA(Asn) in a two-step reaction: asparagine is first activated by ATP to form Asn-AMP and then transferred to the acceptor end of tRNA(Asn). In addition to its essential role in protein synthesis, acts as a signaling molecule that induced migration of CCR3-expressing cells. Has an essential role in the development of the cerebral cortex, being required for proper proliferation of radial glial cells. In Macaca fascicularis (Crab-eating macaque), this protein is Asparagine--tRNA ligase, cytoplasmic.